The following is a 256-amino-acid chain: 5-oxoprolinase subunit A (256 aa).

This sequence belongs to the LamB/PxpA family. Forms a complex composed of PxpA, PxpB and PxpC.

The catalysed reaction is 5-oxo-L-proline + ATP + 2 H2O = L-glutamate + ADP + phosphate + H(+). Catalyzes the cleavage of 5-oxoproline to form L-glutamate coupled to the hydrolysis of ATP to ADP and inorganic phosphate. This Azoarcus sp. (strain BH72) protein is 5-oxoprolinase subunit A.